The sequence spans 607 residues: Elongation factor 4 (607 aa).

Positions 11–193 (SKIRNFSIIA…QIVEKVPAPT (183 aa)) constitute a tr-type G domain. Residues 23–28 (DHGKST) and 140–143 (NKID) each bind GTP.

The protein belongs to the TRAFAC class translation factor GTPase superfamily. Classic translation factor GTPase family. LepA subfamily.

The protein resides in the cell membrane. It carries out the reaction GTP + H2O = GDP + phosphate + H(+). Its function is as follows. Required for accurate and efficient protein synthesis under certain stress conditions. May act as a fidelity factor of the translation reaction, by catalyzing a one-codon backward translocation of tRNAs on improperly translocated ribosomes. Back-translocation proceeds from a post-translocation (POST) complex to a pre-translocation (PRE) complex, thus giving elongation factor G a second chance to translocate the tRNAs correctly. Binds to ribosomes in a GTP-dependent manner. The sequence is that of Elongation factor 4 from Bacillus cereus (strain AH820).